The primary structure comprises 169 residues: NAD(P)H-quinone oxidoreductase subunit 6, chloroplastic (169 aa).

Helical transmembrane passes span 7 to 27, 29 to 49, 58 to 78, 90 to 110, and 139 to 159; these read FSSA…IFLP, IVYA…IYVL, AQVL…IMLV, SPPL…VQMI, and LLAF…AIVL.

Belongs to the complex I subunit 6 family. As to quaternary structure, NDH is composed of at least 16 different subunits, 5 of which are encoded in the nucleus.

It localises to the plastid. It is found in the chloroplast thylakoid membrane. The enzyme catalyses a plastoquinone + NADH + (n+1) H(+)(in) = a plastoquinol + NAD(+) + n H(+)(out). The catalysed reaction is a plastoquinone + NADPH + (n+1) H(+)(in) = a plastoquinol + NADP(+) + n H(+)(out). NDH shuttles electrons from NAD(P)H:plastoquinone, via FMN and iron-sulfur (Fe-S) centers, to quinones in the photosynthetic chain and possibly in a chloroplast respiratory chain. The immediate electron acceptor for the enzyme in this species is believed to be plastoquinone. Couples the redox reaction to proton translocation, and thus conserves the redox energy in a proton gradient. In Nephroselmis olivacea (Green alga), this protein is NAD(P)H-quinone oxidoreductase subunit 6, chloroplastic (ndhG).